The chain runs to 593 residues: Mitoguardin 2 (593 aa).

Helical transmembrane passes span 11–31 (MIQA…TTFG) and 42–62 (PGLR…ALAA). 2 disordered regions span residues 101 to 134 (KKGY…HSGS) and 195 to 228 (LSVG…EPES). The segment covering 107–123 (RRVQSPSSKSNDTLSGI) has biased composition (polar residues). Over residues 124 to 134 (SSIEPSKHSGS) the composition is skewed to low complexity. Position 132 is a phosphoserine (serine 132). A Phosphothreonine modification is found at threonine 206. Phosphoserine occurs at positions 220, 224, and 228. A Phosphothreonine modification is found at threonine 273. Serine 276 and serine 295 each carry phosphoserine. The FFAT motif lies at 292-298 (SFFSATE). The helical transmembrane segment at 563–583 (ILLGYLGVPAASSIGLNGVLP) threads the bilayer.

It belongs to the mitoguardin family. In terms of assembly, homodimer and heterodimer; forms heterodimers with MIGA1. Interacts with PLD6/MitoPLD. Interacts (via phosphorylated FFAT motif) with MOSPD2. Post-translationally, phosphorylation at Ser-295 of the FFAT motif activates interaction with MOSPD2.

The protein localises to the mitochondrion outer membrane. Its function is as follows. Regulator of mitochondrial fusion: acts by forming homo- and heterodimers at the mitochondrial outer membrane and facilitating the formation of PLD6/MitoPLD dimers. May act by regulating phospholipid metabolism via PLD6/MitoPLD. The polypeptide is Mitoguardin 2 (Bos taurus (Bovine)).